The following is a 287-amino-acid chain: Pantothenate synthetase (287 aa).

30 to 37 serves as a coordination point for ATP; it reads MGNLHSGH. The active-site Proton donor is the His37. Gln61 lines the (R)-pantoate pocket. Beta-alanine is bound at residue Gln61. 149-152 serves as a coordination point for ATP; the sequence is GEKD. Gln155 lines the (R)-pantoate pocket. Residues Val178 and 186–189 contribute to the ATP site; that span reads LSSR.

The protein belongs to the pantothenate synthetase family. In terms of assembly, homodimer.

The protein resides in the cytoplasm. The catalysed reaction is (R)-pantoate + beta-alanine + ATP = (R)-pantothenate + AMP + diphosphate + H(+). The protein operates within cofactor biosynthesis; (R)-pantothenate biosynthesis; (R)-pantothenate from (R)-pantoate and beta-alanine: step 1/1. Its function is as follows. Catalyzes the condensation of pantoate with beta-alanine in an ATP-dependent reaction via a pantoyl-adenylate intermediate. The sequence is that of Pantothenate synthetase from Pseudomonas entomophila (strain L48).